The following is a 498-amino-acid chain: U4/U6 small nuclear ribonucleoprotein Prp31 (498 aa).

Coiled coils occupy residues 84-119 and 180-214; these read EAAP…KYSK and DEEL…MSFI. A Nop domain is found at 214–332; sequence IAPNLSIIVG…IERKFDKWQE (119 aa). A disordered region spans residues 333–356; it reads PPPVKQVKPLPAPLDGQRKKRGGR. Positions 350–363 match the Nuclear localization signal (NLS) motif; it reads RKKRGGRRYRKMKE.

The protein belongs to the PRP31 family. As to quaternary structure, identified in the spliceosome B complex. Component of the U4/U6-U5 tri-snRNP complex. Component of some MLL1/MLL complex.

The protein resides in the nucleus. It localises to the nucleus speckle. The protein localises to the cajal body. In terms of biological role, involved in pre-mRNA splicing as component of the spliceosome. Required for the assembly of the U4/U5/U6 tri-snRNP complex, one of the building blocks of the spliceosome. The sequence is that of U4/U6 small nuclear ribonucleoprotein Prp31 (prpf31) from Xenopus tropicalis (Western clawed frog).